The primary structure comprises 524 residues: Probable glycine dehydrogenase (decarboxylating) subunit 2 (524 aa).

Lysine 296 carries the post-translational modification N6-(pyridoxal phosphate)lysine.

It belongs to the GcvP family. C-terminal subunit subfamily. The glycine cleavage system is composed of four proteins: P, T, L and H. In this organism, the P 'protein' is a heterodimer of two subunits. Pyridoxal 5'-phosphate serves as cofactor.

The catalysed reaction is N(6)-[(R)-lipoyl]-L-lysyl-[glycine-cleavage complex H protein] + glycine + H(+) = N(6)-[(R)-S(8)-aminomethyldihydrolipoyl]-L-lysyl-[glycine-cleavage complex H protein] + CO2. Functionally, the glycine cleavage system catalyzes the degradation of glycine. The P protein binds the alpha-amino group of glycine through its pyridoxal phosphate cofactor; CO(2) is released and the remaining methylamine moiety is then transferred to the lipoamide cofactor of the H protein. The polypeptide is Probable glycine dehydrogenase (decarboxylating) subunit 2 (Caulobacter vibrioides (strain ATCC 19089 / CIP 103742 / CB 15) (Caulobacter crescentus)).